The chain runs to 349 residues: Glycosyltransferase 8 domain-containing protein 2 (349 aa).

Residues 1 to 6 (MAFLRK) lie on the Cytoplasmic side of the membrane. Residues 7 to 24 (VNQVLLLLLVLTLCGILY) form a helical; Signal-anchor for type II membrane protein membrane-spanning segment. Topologically, residues 25 to 349 (KKVHKGAVLK…AGIFKLHHNR (325 aa)) are lumenal. N234 carries N-linked (GlcNAc...) asparagine glycosylation.

This sequence belongs to the glycosyltransferase 8 family.

It is found in the membrane. The sequence is that of Glycosyltransferase 8 domain-containing protein 2 (Glt8d2) from Mus musculus (Mouse).